The following is a 617-amino-acid chain: Diacylglycerol O-acyltransferase 1 (617 aa).

Disordered regions lie at residues 1 to 52 (MEPI…ETER) and 95 to 186 (RNTN…PKQE). Polar residues predominate over residues 7 to 17 (SNGNKNNSMDK). Composition is skewed to low complexity over residues 18 to 34 (QPQQPQQPQQQQQQQQQ) and 96 to 105 (NTNNNNQNNT). Residues 106 to 140 (SPTFSSANGKQSNLTQRKINTQIQSKQPTNNNVQP) show a composition bias toward polar residues. The span at 160–177 (QNNNGNNNNNNNNNNNNN) shows a compositional bias: low complexity. The next 5 membrane-spanning stretches (helical) occupy residues 217-237 (LLLILLITASFRLVILNHLLY), 254-274 (WPGVMISLMINLFIIAAYLIE), 306-326 (IIAFSPNPASGIIVMILICTF), 399-419 (IVEALSLSLLILWMVNQYMLP), and 449-469 (YVWLLGFYVFFHLYLNIVAEI). The FYXDWWN motif motif lies at 477 to 483 (FYRDWWN). 3 consecutive transmembrane segments (helical) span residues 520 to 540 (GYFMCFFVSAIFHELVISIPF), 545 to 565 (LWGFFGIMSQMVLIALTKNLM), and 570 to 590 (LGNVIFWISIVLGQPLVVLLY). Histidine 532 is a catalytic residue.

Belongs to the membrane-bound acyltransferase family. Sterol o-acyltransferase subfamily.

It localises to the endoplasmic reticulum membrane. It catalyses the reaction an acyl-CoA + a 1,2-diacyl-sn-glycerol = a triacyl-sn-glycerol + CoA. It carries out the reaction all-trans-retinol + an acyl-CoA = an all-trans-retinyl ester + CoA. The catalysed reaction is 2-(9Z-octadecenoyl)-glycerol + (9Z)-octadecenoyl-CoA = 1,2-di-(9Z-octadecenoyl)-sn-glycerol + CoA. The enzyme catalyses 1,2-di-(9Z-octadecenoyl)-sn-glycerol + (9Z)-octadecenoyl-CoA = 1,2,3-tri-(9Z-octadecenoyl)-glycerol + CoA. It catalyses the reaction all-trans-retinol + hexadecanoyl-CoA = all-trans-retinyl hexadecanoate + CoA. It carries out the reaction 1-O-(9Z-octadecenyl)-glycerol + (9Z)-octadecenoyl-CoA = 1-O-(9Z-octadecyl)-3-(9Z-octadecenoyl)-glycerol + CoA. The catalysed reaction is 1-O-(9Z-octadecyl)-3-(9Z-octadecenoyl)-glycerol + (9Z)-octadecenoyl-CoA = 1-O-(9Z-octadecenyl)-2,3-di-(9Z-octadecenoyl)glycerol + CoA. The enzyme catalyses 1-(9Z-octadecenoyl)-glycerol + (9Z)-octadecenoyl-CoA = 1,2-di-(9Z-octadecenoyl)-glycerol + CoA. It catalyses the reaction 1,2-di-(9Z-octadecenoyl)-glycerol + (9Z)-octadecenoate + H(+) = 1,2,3-tri-(9Z-octadecenoyl)-glycerol + H2O. It carries out the reaction 1-octadecanoyl-2-(5Z,8Z,11Z,14Z-eicosatetraenoyl)-sn-glycerol + (9Z)-octadecenoyl-CoA = 1-octadecanoyl-2-(5Z,8Z,11Z,14Z)-eicosatetraenoyl-3-(9Z)-octadecenoyl-sn-glycerol + CoA. The catalysed reaction is hexadecane-1,2-diol + 2 hexadecanoyl-CoA = 1,2-O,O-dihexadecanoyl-1,2-hexadecanediol + 2 CoA. The enzyme catalyses hexadecane-1,2-diol + hexadecanoyl-CoA = 2-hydroxyhexadecyl hexadecanoate + CoA. It catalyses the reaction 2-(9Z-octadecenoyl)-glycerol + hexadecanoyl-CoA = 1-hexadecanoyl-2-(9Z-octadecenoyl)-sn-glycerol + CoA. It carries out the reaction 1,2-di-(9Z-octadecenoyl)-sn-glycerol + hexadecanoyl-CoA = 1,2-di-(9Z)-octadecenoyl-3-hexadecanoyl-sn-glycerol + CoA. The catalysed reaction is hexadecan-1-ol + hexadecanoyl-CoA = hexadecanyl hexadecanoate + CoA. The enzyme catalyses 13-cis-retinol + hexadecanoyl-CoA = 13-cis-retinyl hexadecanoate + CoA. It catalyses the reaction 1,3-di-(9Z-octadecenoyl)-glycerol + (9Z)-octadecenoyl-CoA = 1,2,3-tri-(9Z-octadecenoyl)-glycerol + CoA. It carries out the reaction 2,3-di-(9Z)-octadecenoyl-sn-glycerol + (9Z)-octadecenoyl-CoA = 1,2,3-tri-(9Z-octadecenoyl)-glycerol + CoA. Its pathway is lipid metabolism; glycerolipid metabolism. Catalyzes the terminal and only committed step in triacylglycerol synthesis by using diacylglycerol and fatty acyl CoA as substrates. This is Diacylglycerol O-acyltransferase 1 (dgat1) from Dictyostelium discoideum (Social amoeba).